The following is a 677-amino-acid chain: Penicillin-binding protein activator LpoA (677 aa).

An N-terminal signal peptide occupies residues 1–26; the sequence is MLPSKIVRHKAGRFVPVLLAGLILAA. Cys27 carries N-palmitoyl cysteine lipidation. Residue Cys27 is the site of S-diacylglycerol cysteine attachment. Positions 309–359 are disordered; that stretch reads QPADANAVVSPSANPAAAQQSGTAQQPATTQQQPQQQPAAEPASNAQVKVY. A compositionally biased stretch (low complexity) spans 313 to 355; that stretch reads ANAVVSPSANPAAAQQSGTAQQPATTQQQPQQQPAAEPASNAQ.

It belongs to the LpoA family. Interacts with PBP1a.

It is found in the cell outer membrane. Its function is as follows. Regulator of peptidoglycan synthesis that is essential for the function of penicillin-binding protein 1A (PBP1a). The protein is Penicillin-binding protein activator LpoA of Pantoea ananatis (strain LMG 20103).